A 498-amino-acid chain; its full sequence is Protein flp (498 aa).

The next 4 helical transmembrane spans lie at 6-26, 389-409, 433-453, and 471-491; these read LYFL…IYIT, FNIV…FSAY, LSLC…YLIL, and LALI…LLFL.

It is found in the cell membrane. Its precise function is unknown. Has no penicillin-binding activity and is not involved in methicillin resistance. The polypeptide is Protein flp (flp) (Staphylococcus aureus (strain NCTC 8325 / PS 47)).